We begin with the raw amino-acid sequence, 241 residues long: Ribose-5-phosphate isomerase A (241 aa).

Substrate contacts are provided by residues 29 to 32 (TGTT), 84 to 87 (DGAD), and 97 to 100 (KGGG). Residue Glu106 is the Proton acceptor of the active site. Lys124 is a substrate binding site.

Belongs to the ribose 5-phosphate isomerase family. Homodimer.

It catalyses the reaction aldehydo-D-ribose 5-phosphate = D-ribulose 5-phosphate. It participates in carbohydrate degradation; pentose phosphate pathway; D-ribose 5-phosphate from D-ribulose 5-phosphate (non-oxidative stage): step 1/1. Catalyzes the reversible conversion of ribose-5-phosphate to ribulose 5-phosphate. The sequence is that of Ribose-5-phosphate isomerase A from Thermoplasma volcanium (strain ATCC 51530 / DSM 4299 / JCM 9571 / NBRC 15438 / GSS1).